A 147-amino-acid chain; its full sequence is 3-hydroxyacyl-[acyl-carrier-protein] dehydratase FabZ (147 aa).

Residue histidine 53 is part of the active site.

The protein belongs to the thioester dehydratase family. FabZ subfamily.

The protein localises to the cytoplasm. The enzyme catalyses a (3R)-hydroxyacyl-[ACP] = a (2E)-enoyl-[ACP] + H2O. Involved in unsaturated fatty acids biosynthesis. Catalyzes the dehydration of short chain beta-hydroxyacyl-ACPs and long chain saturated and unsaturated beta-hydroxyacyl-ACPs. The chain is 3-hydroxyacyl-[acyl-carrier-protein] dehydratase FabZ from Synechococcus sp. (strain WH7803).